Consider the following 274-residue polypeptide: Tropomyosin (274 aa).

The interval 1 to 30 is disordered; sequence MKLEKDNAMDRADTLEQQNKEANIRAEKAE. Residues 1–274 adopt a coiled-coil conformation; sequence MKLEKDNAMD…DQTFSELSGY (274 aa).

This sequence belongs to the tropomyosin family. As to quaternary structure, homodimer.

Its function is as follows. Tropomyosin, in association with the troponin complex, plays a central role in the calcium dependent regulation of muscle contraction. This chain is Tropomyosin, found in Panulirus stimpsoni (Chinese spiny lobster).